The sequence spans 122 residues: Large ribosomal subunit protein uL14 (122 aa).

The protein belongs to the universal ribosomal protein uL14 family. Part of the 50S ribosomal subunit. Forms a cluster with proteins L3 and L19. In the 70S ribosome, L14 and L19 interact and together make contacts with the 16S rRNA in bridges B5 and B8.

Functionally, binds to 23S rRNA. Forms part of two intersubunit bridges in the 70S ribosome. The polypeptide is Large ribosomal subunit protein uL14 (Aliarcobacter butzleri (strain RM4018) (Arcobacter butzleri)).